The sequence spans 537 residues: Cryptic loci regulator 2 (537 aa).

The segment at 96–116 (VSARHVRPNPKSSKDTLEKQP) is disordered. A compositionally biased stretch (basic and acidic residues) spans 107-116 (SSKDTLEKQP).

Interacts with clr3.

The protein localises to the nucleus. It is found in the chromosome. Its subcellular location is the centromere. It localises to the telomere. Its function is as follows. Required for deacetylation in the mating-type region and the centromere. Acts upstream of the histone deacetylases to promote transcriptional silencing. Required for proper positioning of nucleosomes at heterochromatic loci and for transcriptional gene silencing (TGS) function of the Snf2/Hdac-containing repressor complex (SHREC). The protein is Cryptic loci regulator 2 (clr2) of Schizosaccharomyces pombe (strain 972 / ATCC 24843) (Fission yeast).